The primary structure comprises 102 residues: Large ribosomal subunit protein bL21 (102 aa).

This sequence belongs to the bacterial ribosomal protein bL21 family. In terms of assembly, part of the 50S ribosomal subunit. Contacts protein L20.

Functionally, this protein binds to 23S rRNA in the presence of protein L20. This Oceanobacillus iheyensis (strain DSM 14371 / CIP 107618 / JCM 11309 / KCTC 3954 / HTE831) protein is Large ribosomal subunit protein bL21.